The chain runs to 310 residues: Methionyl-tRNA formyltransferase (310 aa).

(6S)-5,6,7,8-tetrahydrofolate is bound at residue Ser111–Pro114.

The protein belongs to the Fmt family.

The enzyme catalyses L-methionyl-tRNA(fMet) + (6R)-10-formyltetrahydrofolate = N-formyl-L-methionyl-tRNA(fMet) + (6S)-5,6,7,8-tetrahydrofolate + H(+). Its function is as follows. Attaches a formyl group to the free amino group of methionyl-tRNA(fMet). The formyl group appears to play a dual role in the initiator identity of N-formylmethionyl-tRNA by promoting its recognition by IF2 and preventing the misappropriation of this tRNA by the elongation apparatus. The polypeptide is Methionyl-tRNA formyltransferase (Nitrobacter hamburgensis (strain DSM 10229 / NCIMB 13809 / X14)).